Consider the following 572-residue polypeptide: Far upstream element-binding protein 3 (572 aa).

An N-acetylalanine modification is found at alanine 2. Glycyl lysine isopeptide (Lys-Gly) (interchain with G-Cter in SUMO2) cross-links involve residues lysine 15 and lysine 57. Threonine 76 is modified (phosphothreonine). KH domains are found at residues 77–141 (VITE…KRLL), 162–228 (STIQ…REMV), 253–317 (GGSI…AHII), and 354–421 (VQEI…RQLI). Serine 296 bears the Phosphoserine mark. Residues 426 to 521 (GGTNLGAPGA…SQPNYSKAWE (96 aa)) are disordered. Residues 496 to 514 (QQPTQQVPSQQSQPQSSQP) are compositionally biased toward low complexity. A phosphoserine mark is found at serine 539 and serine 569.

Detected in a number of cell lines.

Its subcellular location is the nucleus. May interact with single-stranded DNA from the far-upstream element (FUSE). May activate gene expression. The polypeptide is Far upstream element-binding protein 3 (FUBP3) (Homo sapiens (Human)).